A 530-amino-acid chain; its full sequence is DEK domain-containing chromatin-associated protein 2 (530 aa).

2 stretches are compositionally biased toward basic and acidic residues: residues 1–47 and 57–68; these read MATE…AEEE and AKEGELGEKDKE. Positions 1–130 are disordered; it reads MATETLDEKT…PSKSVSIEKG (130 aa). Residues 41–61 adopt a coiled-coil conformation; sequence IGEAEEEKKEDEEEGEAKEGE. Acidic residues predominate over residues 69-82; sequence DDVESEEEEEEEEG. Basic and acidic residues-rich tracts occupy residues 83–93 and 100–110; these read SGSKKSSEKET and RPTRERKKVER. The stretch at 185–205 forms a coiled coil; the sequence is EKEEEKQRARIKEKIDKCVKE. A disordered region spans residues 246–430; that stretch reads IIADQEKAKK…GKAKAEPTRK (185 aa). Over residues 253–263 the composition is skewed to basic residues; the sequence is AKKRKSTPKRG. Positions 260-267 match the Nuclear localization signal 1 motif; the sequence is PKRGKSGE. Residues 286 to 332 are compositionally biased toward acidic residues; it reads SDTEEGKDEGDADSEGTNDPHEEDDAAPEEESDHEKTDTDDEKDEVE. Short sequence motifs (nuclear localization signal) lie at residues 343 to 350 and 384 to 391; these read SKKTVEES and AKKQKVDH. The segment covering 374 to 384 has biased composition (polar residues); the sequence is KQIAKSTSSPA. Basic and acidic residues predominate over residues 387-397; sequence QKVDHVESSKE. The DEK-C domain occupies 426-481; sequence EPTRKEMLEVVSKILKEVDFNTATLSDILQKLSDHFGVELSHRKPEVKDVITEAIN. 2 DNA-binding regions span residues 444 to 458 and 473 to 477; these read DFNTATLSDILQKLS and KDVIT. The interval 482-530 is disordered; that stretch reads AMTDDEEEDEEEEAEAGSDKEKEEVKGEEEEEKAEAESDKEKEKEEPKD. Positions 484 to 497 are enriched in acidic residues; that stretch reads TDDEEEDEEEEAEA. Residues 492-527 adopt a coiled-coil conformation; sequence EEEAEAGSDKEKEEVKGEEEEEKAEAESDKEKEKEE. Residues 516–530 show a composition bias toward basic and acidic residues; it reads EAESDKEKEKEEPKD.

As to quaternary structure, found in a mRNA splicing-dependent exon junction complex (EJC). Binds specifically histones H3 and H4.

It localises to the nucleus. Its subcellular location is the nucleolus. Functionally, chromatin-associated protein which contributes to the modulation of chromatin structure (such as super-helical structure of DNA) and function. Binds to chromatin of protein-coding genes throughout the genome to regulate nucleosome occupancy and chromatin accessibility, and to modulate the expression of target genes. The protein is DEK domain-containing chromatin-associated protein 2 of Arabidopsis thaliana (Mouse-ear cress).